The sequence spans 151 residues: Large ribosomal subunit protein uL15 (151 aa).

Residues 1–51 (MKSLRLEDAVPQSGSRHRKLRVGRGHSAGQGKTSGRGMRGQKCRSGGGVRP) are disordered. Residues 15-24 (SRHRKLRVGR) are compositionally biased toward basic residues. The segment covering 26–38 (HSAGQGKTSGRGM) has biased composition (gly residues).

The protein belongs to the universal ribosomal protein uL15 family. Part of the 50S ribosomal subunit.

Its function is as follows. Binds to the 23S rRNA. The polypeptide is Large ribosomal subunit protein uL15 (Gloeobacter violaceus (strain ATCC 29082 / PCC 7421)).